We begin with the raw amino-acid sequence, 425 residues long: Apolipoprotein N-acyltransferase (425 aa).

6 consecutive transmembrane segments (helical) span residues 12-32 (LLAC…AYAI), 34-54 (NPYI…LAFL), 60-80 (SAFA…ALSF), 88-108 (LLPL…YLLL), 120-140 (FLGS…DSFF), and 142-162 (YSVF…CIFL). The CN hydrolase domain maps to 201–425 (VSTKTPQDLK…LGDILFRKRS (225 aa)). The Proton acceptor role is filled by E242. The active site involves K296. C349 serves as the catalytic Nucleophile.

It belongs to the CN hydrolase family. Apolipoprotein N-acyltransferase subfamily.

The protein localises to the cell inner membrane. It carries out the reaction N-terminal S-1,2-diacyl-sn-glyceryl-L-cysteinyl-[lipoprotein] + a glycerophospholipid = N-acyl-S-1,2-diacyl-sn-glyceryl-L-cysteinyl-[lipoprotein] + a 2-acyl-sn-glycero-3-phospholipid + H(+). It participates in protein modification; lipoprotein biosynthesis (N-acyl transfer). Functionally, catalyzes the phospholipid dependent N-acylation of the N-terminal cysteine of apolipoprotein, the last step in lipoprotein maturation. In Helicobacter pylori (strain ATCC 700392 / 26695) (Campylobacter pylori), this protein is Apolipoprotein N-acyltransferase.